We begin with the raw amino-acid sequence, 164 residues long: Peptidyl-prolyl cis-trans isomerase A-like 4F (164 aa).

Residues 7-163 (FFEITRDGKP…KKITIADCGQ (157 aa)) form the PPIase cyclophilin-type domain.

Belongs to the cyclophilin-type PPIase family. PPIase A subfamily.

Its subcellular location is the cytoplasm. The enzyme catalyses [protein]-peptidylproline (omega=180) = [protein]-peptidylproline (omega=0). Its function is as follows. PPIases accelerate the folding of proteins. It catalyzes the cis-trans isomerization of proline imidic peptide bonds in oligopeptides. This chain is Peptidyl-prolyl cis-trans isomerase A-like 4F, found in Homo sapiens (Human).